The primary structure comprises 466 residues: 3-isopropylmalate dehydratase large subunit (466 aa).

The [4Fe-4S] cluster site is built by Cys-346, Cys-406, and Cys-409.

The protein belongs to the aconitase/IPM isomerase family. LeuC type 1 subfamily. Heterodimer of LeuC and LeuD. [4Fe-4S] cluster is required as a cofactor.

It carries out the reaction (2R,3S)-3-isopropylmalate = (2S)-2-isopropylmalate. Its pathway is amino-acid biosynthesis; L-leucine biosynthesis; L-leucine from 3-methyl-2-oxobutanoate: step 2/4. Catalyzes the isomerization between 2-isopropylmalate and 3-isopropylmalate, via the formation of 2-isopropylmaleate. In Cytophaga hutchinsonii (strain ATCC 33406 / DSM 1761 / CIP 103989 / NBRC 15051 / NCIMB 9469 / D465), this protein is 3-isopropylmalate dehydratase large subunit.